A 291-amino-acid chain; its full sequence is G1/S-specific cyclin-D2 (291 aa).

The disordered stretch occupies residues 264 to 291 (QQQQSNPSKTIEELDQASTPTDVRDINL). T282 bears the Phosphothreonine mark.

It belongs to the cyclin family. Cyclin D subfamily. In terms of assembly, interacts with the CDK4 and CDK6 protein kinases to form a serine/threonine kinase holoenzyme complex. The cyclin subunit imparts substrate specificity to the complex. Post-translationally, phosphorylation at Thr-282 by MAP kinases is required for ubiquitination and degradation by the DCX(AMBRA1) complex. Ubiquitinated by the DCX(AMBRA1) complex during the transition from G1 to S cell phase, leading to its degradation: ubiquitination is dependent on Thr-282 phosphorylation. The DCX(AMBRA1) complex represents the major regulator of CCND2 stability during the G1/S transition.

It localises to the nucleus. It is found in the cytoplasm. The protein resides in the nucleus membrane. Its function is as follows. Regulatory component of the cyclin D2-CDK4 (DC) complex that phosphorylates and inhibits members of the retinoblastoma (RB) protein family including RB1 and regulates the cell-cycle during G(1)/S transition. Phosphorylation of RB1 allows dissociation of the transcription factor E2F from the RB/E2F complex and the subsequent transcription of E2F target genes which are responsible for the progression through the G(1) phase. Hypophosphorylates RB1 in early G(1) phase. Cyclin D-CDK4 complexes are major integrators of various mitogenenic and antimitogenic signals. The polypeptide is G1/S-specific cyclin-D2 (CCND2) (Gallus gallus (Chicken)).